A 520-amino-acid polypeptide reads, in one-letter code: Amine oxidase [flavin-containing] B (520 aa).

Ser-2 bears the N-acetylserine mark. Over 2-489 the chain is Cytoplasmic; sequence SSKCDVVVVG…TFLQRHLPSV (488 aa). Lys-52 carries the N6-acetyllysine modification. Cys-397 is subject to S-8alpha-FAD cysteine. Residues 490–516 traverse the membrane as a helical; Anchor for type IV membrane protein segment; the sequence is PGLLKLIGLTTIFSATALGFLAHKRGL. Residues 517–520 are Mitochondrial intermembrane-facing; sequence LVRI.

Monomer, homo- or heterodimer (containing two subunits of similar size). Each subunit contains a covalently bound flavin. Enzymatically active as monomer. FAD serves as cofactor.

The protein localises to the mitochondrion outer membrane. The enzyme catalyses a secondary aliphatic amine + O2 + H2O = a primary amine + an aldehyde + H2O2. It catalyses the reaction a primary methyl amine + O2 + H2O = an aldehyde + H2O2 + NH4(+). It carries out the reaction benzylamine + O2 + H2O = benzaldehyde + H2O2 + NH4(+). The catalysed reaction is (R)-adrenaline + O2 + H2O = (R)-3,4-dihydroxymandelaldehyde + methylamine + H2O2. The enzyme catalyses dopamine + O2 + H2O = 3,4-dihydroxyphenylacetaldehyde + H2O2 + NH4(+). It catalyses the reaction tyramine + O2 + H2O = (4-hydroxyphenyl)acetaldehyde + H2O2 + NH4(+). It carries out the reaction (R)-noradrenaline + O2 + H2O = (R)-3,4-dihydroxymandelaldehyde + H2O2 + NH4(+). The catalysed reaction is 2-phenylethylamine + O2 + H2O = 2-phenylacetaldehyde + H2O2 + NH4(+). The enzyme catalyses N-acetylputrescine + O2 + H2O = 4-acetamidobutanal + H2O2 + NH4(+). Functionally, catalyzes the oxidative deamination of primary and some secondary amines such as neurotransmitters, and exogenous amines including the tertiary amine, neurotoxin 1-methyl-4-phenyl-1,2,3,6-tetrahydropyridine (MPTP), with concomitant reduction of oxygen to hydrogen peroxide and participates in the metabolism of neuroactive and vasoactive amines in the central nervous system and peripheral tissues. Preferentially degrades benzylamine and phenylethylamine. This chain is Amine oxidase [flavin-containing] B, found in Bos taurus (Bovine).